The primary structure comprises 211 residues: Protein-L-isoaspartate O-methyltransferase (211 aa).

Residue Ser-62 is part of the active site.

This sequence belongs to the methyltransferase superfamily. L-isoaspartyl/D-aspartyl protein methyltransferase family.

It is found in the cytoplasm. The enzyme catalyses [protein]-L-isoaspartate + S-adenosyl-L-methionine = [protein]-L-isoaspartate alpha-methyl ester + S-adenosyl-L-homocysteine. In terms of biological role, catalyzes the methyl esterification of L-isoaspartyl residues in peptides and proteins that result from spontaneous decomposition of normal L-aspartyl and L-asparaginyl residues. It plays a role in the repair and/or degradation of damaged proteins. This is Protein-L-isoaspartate O-methyltransferase from Shewanella piezotolerans (strain WP3 / JCM 13877).